A 270-amino-acid polypeptide reads, in one-letter code: 5'-AMP-activated protein kinase subunit beta-1 (270 aa).

Residues Met1–Leu46 are disordered. The N-myristoyl glycine moiety is linked to residue Gly2. Thr4 is modified (phosphothreonine). Phosphoserine is present on residues Ser5 and Ser6. Thr19 is subject to Phosphothreonine. Residues Arg21 to Ile36 show a composition bias toward basic and acidic residues. Phosphoserine; by autocatalysis is present on residues Ser24 and Ser25. Phosphoserine is present on residues Ser40, Ser96, and Ser101. The glycogen-binding domain stretch occupies residues Glu68–Phe163. Ser108 carries the phosphoserine; by autocatalysis modification. Position 148 is a phosphothreonine (Thr148). Ser182 carries the phosphoserine modification.

Belongs to the 5'-AMP-activated protein kinase beta subunit family. As to quaternary structure, AMPK is a heterotrimer of an alpha catalytic subunit (PRKAA1 or PRKAA2), a beta (PRKAB1 or PRKAB2) and a gamma non-catalytic subunits (PRKAG1, PRKAG2 or PRKAG3). Interacts with FNIP1 and FNIP2. Post-translationally, phosphorylated when associated with the catalytic subunit (PRKAA1 or PRKAA2). Phosphorylated by ULK1; leading to negatively regulate AMPK activity and suggesting the existence of a regulatory feedback loop between ULK1 and AMPK.

In terms of biological role, non-catalytic subunit of AMP-activated protein kinase (AMPK), an energy sensor protein kinase that plays a key role in regulating cellular energy metabolism. In response to reduction of intracellular ATP levels, AMPK activates energy-producing pathways and inhibits energy-consuming processes: inhibits protein, carbohydrate and lipid biosynthesis, as well as cell growth and proliferation. AMPK acts via direct phosphorylation of metabolic enzymes, and by longer-term effects via phosphorylation of transcription regulators. Also acts as a regulator of cellular polarity by remodeling the actin cytoskeleton; probably by indirectly activating myosin. Beta non-catalytic subunit acts as a scaffold on which the AMPK complex assembles, via its C-terminus that bridges alpha (PRKAA1 or PRKAA2) and gamma subunits (PRKAG1, PRKAG2 or PRKAG3). The chain is 5'-AMP-activated protein kinase subunit beta-1 (PRKAB1) from Pongo abelii (Sumatran orangutan).